The chain runs to 211 residues: Probable nicotinate-nucleotide adenylyltransferase (211 aa).

This sequence belongs to the NadD family.

The enzyme catalyses nicotinate beta-D-ribonucleotide + ATP + H(+) = deamido-NAD(+) + diphosphate. It functions in the pathway cofactor biosynthesis; NAD(+) biosynthesis; deamido-NAD(+) from nicotinate D-ribonucleotide: step 1/1. Catalyzes the reversible adenylation of nicotinate mononucleotide (NaMN) to nicotinic acid adenine dinucleotide (NaAD). This chain is Probable nicotinate-nucleotide adenylyltransferase, found in Cellvibrio japonicus (strain Ueda107) (Pseudomonas fluorescens subsp. cellulosa).